The chain runs to 183 residues: uncharacterized protein (183 aa).

Positions 1 to 29 (MQCWQQPFLRFLQQPFFLATASLAGSSSS) are cleaved as a signal peptide. Positions 149 to 183 (PGSTCDGSLKGRAYPSCVPKRDPEHSREESHPLSG) are disordered. Residues 167-183 (PKRDPEHSREESHPLSG) are compositionally biased toward basic and acidic residues.

The protein localises to the secreted. This is an uncharacterized protein from Homo sapiens (Human).